The following is a 172-amino-acid chain: Early E3 18.5 kDa glycoprotein (172 aa).

Positions 1-19 (MGAILVVLALLSLLGLGSA) are cleaved as a signal peptide. The Lumenal segment spans residues 20–136 (NLNPLDHDPC…SKENIVAFSI (117 aa)). N-linked (GlcNAc...) asparagine; by host glycosylation occurs at Asn-36. 2 disulfides stabilise this stretch: Cys-37–Cys-55 and Cys-49–Cys-111. 3 N-linked (GlcNAc...) asparagine; by host glycosylation sites follow: Asn-68, Asn-72, and Asn-102. A helical transmembrane segment spans residues 137–157 (AYCLVTCIITAIICVCIHLLI). The Cytoplasmic portion of the chain corresponds to 158–172 (VIRPRQSNEEKEKMP). The short motif at 168-172 (KEKMP) is the Di-lysine motif element.

This sequence belongs to the adenoviridae E19 family. In terms of processing, both disulfide bonds are absolutely critical for the interaction with MHC antigens. N-glycosylated; high-mannose.

It localises to the host endoplasmic reticulum membrane. Binds and retains class I heavy chains in the endoplasmic reticulum during the early period of virus infection, thereby impairing their transport to the cell surface. Also delays the expression of class I alleles that it cannot affect by direct retention. Binds transporters associated with antigen processing (TAP) and acts as a tapasin inhibitor, preventing class I/TAP association. In consequence, infected cells are masked for immune recognition by cytotoxic T-lymphocytes. This chain is Early E3 18.5 kDa glycoprotein, found in Human adenovirus B serotype 3 (HAdV-3).